The chain runs to 335 residues: Protein STRICTOSIDINE SYNTHASE-LIKE 12 (335 aa).

A signal peptide spans 1–22 (MTSFCSMISLLLLLSLSSAVFS). A glycan (N-linked (GlcNAc...) asparagine) is linked at asparagine 80.

This sequence belongs to the strictosidine synthase family.

It is found in the vacuole. The enzyme catalyses 3alpha(S)-strictosidine + H2O = secologanin + tryptamine. The protein operates within alkaloid biosynthesis; 3alpha(S)-strictosidine biosynthesis; 3alpha(S)-strictosidine from secologanin and tryptamine: step 1/1. Catalyzes the stereospecific condensation of tryptamine with secologanin to form strictosidine, the key intermediate of indole alkaloid biosynthesis. This chain is Protein STRICTOSIDINE SYNTHASE-LIKE 12, found in Arabidopsis thaliana (Mouse-ear cress).